Reading from the N-terminus, the 390-residue chain is NADH-dependent butanol dehydrogenase B (390 aa).

The protein belongs to the iron-containing alcohol dehydrogenase family. In terms of assembly, homodimer.

The protein operates within alcohol metabolism; butanol biosynthesis. This chain is NADH-dependent butanol dehydrogenase B (bdhB), found in Clostridium acetobutylicum (strain ATCC 824 / DSM 792 / JCM 1419 / IAM 19013 / LMG 5710 / NBRC 13948 / NRRL B-527 / VKM B-1787 / 2291 / W).